Reading from the N-terminus, the 714-residue chain is Angiogenic factor with G patch and FHA domains 1 (714 aa).

Residues 1–18 show a composition bias toward pro residues; that stretch reads MASEAPSPPRSPPPPTSP. Disordered stretches follow at residues 1–22, 259–307, and 322–384; these read MASEAPSPPRSPPPPTSPEPEL, QPYP…HTSC, and IGIH…SYDE. Position 2 is an N-acetylalanine (Ala-2). Phosphoserine occurs at positions 7 and 11. Residues 18-88 adopt a coiled-coil conformation; the sequence is PEPELAQLRR…QRGRNEDNKK (71 aa). Residues 279–298 show a composition bias toward basic and acidic residues; the sequence is KDPDSSATNEEKDLNSEDQK. Positions 335-355 are enriched in polar residues; sequence VPTSGNTIESPLHENISNSTS. At Ser-344 the chain carries Phosphoserine. A compositionally biased stretch (acidic residues) spans 364 to 383; the sequence is TDSEPEEGEITDSQTEDSYD. One can recognise an FHA domain in the interval 434-487; sequence ATIGREKDMEHTLRIPEVGVSKFHAEIYFDHDLQSYVLVDQGSQNGTIVNGKQI. The span at 586-609 shows a compositional bias: basic and acidic residues; the sequence is KYKDRAGKRREQVGSEGTFQRDDA. 2 disordered regions span residues 586–617 and 655–714; these read KYKDRAGKRREQVGSEGTFQRDDAPASVHSEI and RTHA…GTLE. Positions 619–665 constitute a G-patch domain; sequence DSNKGRKMLEKMGWKKGEGLGKDGGGMKTPIQLQLRRTHAGLGTGKP. The residue at position 664 (Lys-664) is an N6-acetyllysine. A compositionally biased stretch (basic and acidic residues) spans 680–690; the sequence is KNWDKARERFT.

As to quaternary structure, interacts with the secreted angiogenic factor TNFSF12. In terms of tissue distribution, widely expressed. Expressed in endothelial cells, vascular smooth muscle cells and osteoblasts. Expressed in umbilical vein endothelial cells and microvascular endothelial cells.

The protein localises to the cytoplasm. It is found in the secreted. Promotes angiogenesis and the proliferation of endothelial cells. Able to bind to endothelial cells and promote cell proliferation, suggesting that it may act in an autocrine fashion. This is Angiogenic factor with G patch and FHA domains 1 (AGGF1) from Homo sapiens (Human).